Consider the following 463-residue polypeptide: Cysteine--tRNA ligase (463 aa).

C28 contacts Zn(2+). A 'HIGH' region motif is present at residues 30–40; sequence ITPYDLCHIGH. C211, H236, and E240 together coordinate Zn(2+). The 'KMSKS' region motif lies at 268–272; sequence KMSKS. An ATP-binding site is contributed by K271.

Belongs to the class-I aminoacyl-tRNA synthetase family. As to quaternary structure, monomer. It depends on Zn(2+) as a cofactor.

It localises to the cytoplasm. The catalysed reaction is tRNA(Cys) + L-cysteine + ATP = L-cysteinyl-tRNA(Cys) + AMP + diphosphate. The polypeptide is Cysteine--tRNA ligase (Wigglesworthia glossinidia brevipalpis).